A 50-amino-acid chain; its full sequence is Mast cell degranulating peptide (50 aa).

Positions 1–27 (MISMLRCTFFFVSVILITSYFVTPTMS) are cleaved as a signal peptide. At Lys-29 the chain carries N6-formyllysine. Residues Cys-30 and Cys-42 are joined by a disulfide bond. N6-formyllysine occurs at positions 44 and 48. At Asn-49 the chain carries Asparagine amide.

As to expression, expressed by the venom gland.

Its subcellular location is the secreted. Potent anti-inflammatory agent. At low concentrations, mediates the degranulation of mast cells thus evoking an inflammatory response. Also acts as a neurotoxin capable of blocking a class of voltage-gated potassium channels. This Apis cerana cerana (Oriental honeybee) protein is Mast cell degranulating peptide.